Reading from the N-terminus, the 327-residue chain is Cysteine synthase (327 aa).

An N6-(pyridoxal phosphate)lysine modification is found at lysine 65. Pyridoxal 5'-phosphate-binding positions include asparagine 95, 200 to 204 (GTGGT), and serine 282.

This sequence belongs to the cysteine synthase/cystathionine beta-synthase family. The cofactor is pyridoxal 5'-phosphate.

The enzyme catalyses O-acetyl-L-serine + hydrogen sulfide = L-cysteine + acetate. Its pathway is amino-acid biosynthesis; L-cysteine biosynthesis; L-cysteine from L-serine: step 2/2. The sequence is that of Cysteine synthase (cysM) from Aquifex aeolicus (strain VF5).